The sequence spans 395 residues: Elongation factor Tu (395 aa).

A tr-type G domain is found at K10 to R205. Residues G19–T26 are G1. G19–T26 contributes to the GTP binding site. T26 is a Mg(2+) binding site. Residues G60 to N64 are G2. The segment at D81–G84 is G3. GTP is bound by residues D81–H85 and N136–D139. Residues N136 to D139 are G4. The tract at residues S174–L176 is G5.

It belongs to the TRAFAC class translation factor GTPase superfamily. Classic translation factor GTPase family. EF-Tu/EF-1A subfamily. In terms of assembly, monomer.

It localises to the cytoplasm. It carries out the reaction GTP + H2O = GDP + phosphate + H(+). Its function is as follows. GTP hydrolase that promotes the GTP-dependent binding of aminoacyl-tRNA to the A-site of ribosomes during protein biosynthesis. This Cytophaga hutchinsonii (strain ATCC 33406 / DSM 1761 / CIP 103989 / NBRC 15051 / NCIMB 9469 / D465) protein is Elongation factor Tu.